A 135-amino-acid polypeptide reads, in one-letter code: Large ribosomal subunit protein eL27 (135 aa).

Belongs to the eukaryotic ribosomal protein eL27 family.

This is Large ribosomal subunit protein eL27 (RPL27) from Pisum sativum (Garden pea).